Reading from the N-terminus, the 73-residue chain is Mauriporin (73 aa).

A signal peptide spans 1-22; the sequence is MNKKTLLVIFFITMLIVDEVNS.

The protein belongs to the non-disulfide-bridged peptide (NDBP) superfamily. Long chain multifunctional peptide (group 2) family. In terms of tissue distribution, expressed by the venom gland.

The protein resides in the secreted. Its subcellular location is the target cell membrane. Amphipathic peptide that displays potent antimicrobial activities against a range of Gram-positive and Gram-negative planktonic bacteria with MIC values in the range 5 uM to 10 uM. In more details, it is active on Listeria ivanovii (MIC=5 uM), Staphylococcus epidermidis (MIC=10 uM), Salmonella enterica (MIC=5 uM), Pseudomonas aeruginosa (ATCC 27853) (MIC=5 uM), Acinetobacter baumannii (MIC=5 uM), Klebsiella pneumoniae (MIC=5 uM), Escherichia coli (MIC=7.5 uM), Salmonella typhimurium (MIC=7.5 uM), Pseudomonas aeruginosa (ATCC 9027) (MIC=10 uM). Is also able to prevent P.aeruginosa biofilm formation while showing weak hemolytic activity towards human erythrocytes. Probably induces bacterial cell death through membrane permeabilization. Moreover, shows DNA-binding activities. Also exerts potent selective cytotoxic and antiproliferative activity against three different prostate cancer cell lines (IC(50)=4.4-7.8 uM), compared to non-tumorigenic cell lines (IC(50)=59.7 uM in Vero and 62.5 uM in HUVEC cells). This peptide possibly exerts its cytotoxic activity through a necrotic mode of cell death. Only shows diminished hemolytic activity against sheep erythrocytes. Does not induce cell death through apoptosis and consequently is not acting upon an intracellular target. This is Mauriporin from Androctonus mauritanicus (Fat-tailed scorpion).